The chain runs to 231 residues: MSRSAKPQNGRRRFLRDVVRTAGGLAAVGVALGLQQQTARASGVRLRPPGAINENAFASACVRCGQCVQACPYDTLKLATLASGLSAGTPYFVARDIPCEMCEDIPCAKVCPSGALDREIESIDDARMGLAVLVDQENCLNFQGLRCDVCYRECPKIDEAITLELERNTRTGKHARFLPTVHSDACTGCGKCEKVCVLEQPAIKVLPLSLAKGELGHHYRFGWLEGNNGKS.

A signal peptide (tat-type signal) is located at residues 1–41 (MSRSAKPQNGRRRFLRDVVRTAGGLAAVGVALGLQQQTARA). 4 consecutive 4Fe-4S ferredoxin-type domains span residues 50 to 81 (GAIN…LATL), 89 to 121 (TPYF…REIE), 130 to 166 (LAVL…LELE), and 177 to 208 (FLPT…VLPL). [4Fe-4S] cluster-binding residues include cysteine 61, cysteine 64, cysteine 67, cysteine 71, cysteine 99, cysteine 102, cysteine 107, cysteine 111, cysteine 139, cysteine 147, cysteine 150, cysteine 154, cysteine 186, cysteine 189, cysteine 192, and cysteine 196.

[4Fe-4S] cluster serves as cofactor. Post-translationally, exported by the Tat system. The position of the signal peptide cleavage has not been experimentally proven.

It is found in the periplasm. In terms of biological role, required for electron transfer from ubiquinol, via NapC, to the periplasmic nitrate reductase NapAB complex. The polypeptide is Ferredoxin-type protein NapG (napG) (Escherichia coli (strain K12)).